A 210-amino-acid polypeptide reads, in one-letter code: Somatotropin-2 (210 aa).

Positions 1-22 are cleaved as a signal peptide; the sequence is MGQVFLLMPVLLVSCFLSQGAA. His38 contributes to the Zn(2+) binding site. Residues Cys71 and Cys183 are joined by a disulfide bond. Residue Glu192 participates in Zn(2+) binding. Cys200 and Cys208 are disulfide-bonded.

It belongs to the somatotropin/prolactin family.

It is found in the secreted. In terms of biological role, growth hormone plays an important role in growth control and is involved in the regulation of several anabolic processes. Implicated as an osmoregulatory substance important for seawater adaptation. The sequence is that of Somatotropin-2 (gh2) from Oncorhynchus nerka (Sockeye salmon).